A 248-amino-acid polypeptide reads, in one-letter code: Large ribosomal subunit protein uL4 (248 aa).

The interval 44-109 (QDTGTDEYAG…LDINTKERKL (66 aa)) is disordered. The segment covering 92–109 (PKAEKDRGLDINTKERKL) has biased composition (basic and acidic residues).

This sequence belongs to the universal ribosomal protein uL4 family. In terms of assembly, part of the 50S ribosomal subunit.

In terms of biological role, one of the primary rRNA binding proteins, this protein initially binds near the 5'-end of the 23S rRNA. It is important during the early stages of 50S assembly. It makes multiple contacts with different domains of the 23S rRNA in the assembled 50S subunit and ribosome. Forms part of the polypeptide exit tunnel. The chain is Large ribosomal subunit protein uL4 from Natronomonas pharaonis (strain ATCC 35678 / DSM 2160 / CIP 103997 / JCM 8858 / NBRC 14720 / NCIMB 2260 / Gabara) (Halobacterium pharaonis).